Consider the following 525-residue polypeptide: GMP synthase [glutamine-hydrolyzing] (525 aa).

Positions 9 to 207 constitute a Glutamine amidotransferase type-1 domain; that stretch reads RVLILDFGSQ…VLEIAGCEPL (199 aa). Cys-86 serves as the catalytic Nucleophile. Residues His-181 and Glu-183 contribute to the active site. One can recognise a GMPS ATP-PPase domain in the interval 208 to 400; sequence WTPANIVEDA…LGLPYDMVYR (193 aa). ATP is bound at residue 235 to 241; it reads SGGVDSS.

As to quaternary structure, homodimer.

The catalysed reaction is XMP + L-glutamine + ATP + H2O = GMP + L-glutamate + AMP + diphosphate + 2 H(+). The protein operates within purine metabolism; GMP biosynthesis; GMP from XMP (L-Gln route): step 1/1. Its function is as follows. Catalyzes the synthesis of GMP from XMP. The protein is GMP synthase [glutamine-hydrolyzing] of Teredinibacter turnerae (strain ATCC 39867 / T7901).